The primary structure comprises 349 residues: 4-hydroxy-3-methylbut-2-en-1-yl diphosphate synthase (flavodoxin) (349 aa).

Positions 265, 268, 300, and 307 each coordinate [4Fe-4S] cluster.

This sequence belongs to the IspG family. Requires [4Fe-4S] cluster as cofactor.

It carries out the reaction (2E)-4-hydroxy-3-methylbut-2-enyl diphosphate + oxidized [flavodoxin] + H2O + 2 H(+) = 2-C-methyl-D-erythritol 2,4-cyclic diphosphate + reduced [flavodoxin]. It participates in isoprenoid biosynthesis; isopentenyl diphosphate biosynthesis via DXP pathway; isopentenyl diphosphate from 1-deoxy-D-xylulose 5-phosphate: step 5/6. Its function is as follows. Converts 2C-methyl-D-erythritol 2,4-cyclodiphosphate (ME-2,4cPP) into 1-hydroxy-2-methyl-2-(E)-butenyl 4-diphosphate. This Thermodesulfovibrio yellowstonii (strain ATCC 51303 / DSM 11347 / YP87) protein is 4-hydroxy-3-methylbut-2-en-1-yl diphosphate synthase (flavodoxin).